Reading from the N-terminus, the 130-residue chain is Small ribosomal subunit protein uS9 (130 aa).

This sequence belongs to the universal ribosomal protein uS9 family.

The polypeptide is Small ribosomal subunit protein uS9 (Enterococcus faecalis (strain ATCC 700802 / V583)).